The sequence spans 121 residues: uncharacterized protein (121 aa).

Residues 12-24 are compositionally biased toward low complexity; it reads EEGGASAAAPDAS. Disordered stretches follow at residues 12–63 and 101–121; these read EEGG…RLEP and KKLA…SPVV. The span at 26 to 35 shows a compositional bias: basic residues; it reads KSKKGARPCF. Residues 40 to 49 are compositionally biased toward polar residues; it reads QAGSCMTGRQ. Positions 112–121 are enriched in basic and acidic residues; the sequence is GSQKERSPVV.

This is an uncharacterized protein from Homo sapiens (Human).